Consider the following 194-residue polypeptide: Holliday junction branch migration complex subunit RuvA (194 aa).

The segment at 1–64 (MIGRLRGILA…EDSVALYGFL (64 aa)) is domain I. Positions 65–140 (REGERRLFRD…RAADFSSGAP (76 aa)) are domain II. Positions 140–144 (PITGQ) are flexible linker. Residues 145 to 194 (LGPDAVSEATVALQQLGYKPAEAARMARDAGAEGDEVATVIRKALQAALR) are domain III.

Belongs to the RuvA family. As to quaternary structure, homotetramer. Forms an RuvA(8)-RuvB(12)-Holliday junction (HJ) complex. HJ DNA is sandwiched between 2 RuvA tetramers; dsDNA enters through RuvA and exits via RuvB. An RuvB hexamer assembles on each DNA strand where it exits the tetramer. Each RuvB hexamer is contacted by two RuvA subunits (via domain III) on 2 adjacent RuvB subunits; this complex drives branch migration. In the full resolvosome a probable DNA-RuvA(4)-RuvB(12)-RuvC(2) complex forms which resolves the HJ.

The protein resides in the cytoplasm. Functionally, the RuvA-RuvB-RuvC complex processes Holliday junction (HJ) DNA during genetic recombination and DNA repair, while the RuvA-RuvB complex plays an important role in the rescue of blocked DNA replication forks via replication fork reversal (RFR). RuvA specifically binds to HJ cruciform DNA, conferring on it an open structure. The RuvB hexamer acts as an ATP-dependent pump, pulling dsDNA into and through the RuvAB complex. HJ branch migration allows RuvC to scan DNA until it finds its consensus sequence, where it cleaves and resolves the cruciform DNA. The chain is Holliday junction branch migration complex subunit RuvA from Xanthomonas euvesicatoria pv. vesicatoria (strain 85-10) (Xanthomonas campestris pv. vesicatoria).